The chain runs to 876 residues: MEMKPKYNPREVESGRYDQWVNSGYFKAKDDQSKETYTIVIPPPNVTGKLHLGHAWDTTLQDILTRMKRMQGYDTLYLPGMDHAGIATQAKVEAKLNEQGLSRHDLGREKFLEQAWDWKEEYANFIRQQWAKLGLGLDYSRERFTLDEGLSKAVKKVFVDMYNKGLIYRGEYIINWDPIARTALSDIEVIHEDVQGKFYHFKYPYADGNGYIEIATTRPETMLGDTAIVVNPNDERYKDVIGKTVILPIVGRELPILADEYVDIEFGSGAMKVTPAHDPNDFEIGNRHDLERIIVMDESGKMNDKADKYQGMDRFDCREQLVKDLEAENLVIKIEEHEHSVGHSERSGAVVEPYLSTQWFVKMKPLAEQALNNQKTDDRIDFVPARFEKTFNRWMEEIRDWTISRQLWWGHQIPAWYHKETGEIFVGEHEPEDIENWVQDEDVLDTWFSSALWPFSTLGWPDVEADDFQRYFPTNALVTGYDIIFFWVARMIFQGLEFTGKRPFNDVLLHGLVRAEDGRKMSKSLGNGVDPMDVIDEYGADSLRYFLATGSSPGHDLRYSTEKVESIWNFINKIWNAARFSIMNIGEDFTVEQVDLSGDLSLADKWILTRLNETIENVTELSDKYEFGEVGRTLYNFIWDEFCDWYIEMSKIPMNGEDEAQKQITRSVLTYVLDNTMRMLHPFMPFVTEQIWQNLPHEGETIVKAAWPKVNEALVFDDSKETMQQLVEIIKSVRQSRLEVDTPLSKAIPIFIKAKDENIKETLLNNSNYIDRFCHPSELTIDTTIEIPEKAMTSVTTAGEVVLPLEGLIDMDKEIARLENELLKWEKELDRVNKKLANENFVNKAPEKVINEEREKKQTYQEKYDGVKLRINQLKA.

A 'HIGH' region motif is present at residues 44-54 (PNVTGKLHLGH). Residues 520–524 (KMSKS) carry the 'KMSKS' region motif. Lysine 523 serves as a coordination point for ATP. A coiled-coil region spans residues 806 to 876 (EGLIDMDKEI…VKLRINQLKA (71 aa)).

It belongs to the class-I aminoacyl-tRNA synthetase family. ValS type 1 subfamily. As to quaternary structure, monomer.

It is found in the cytoplasm. The catalysed reaction is tRNA(Val) + L-valine + ATP = L-valyl-tRNA(Val) + AMP + diphosphate. In terms of biological role, catalyzes the attachment of valine to tRNA(Val). As ValRS can inadvertently accommodate and process structurally similar amino acids such as threonine, to avoid such errors, it has a 'posttransfer' editing activity that hydrolyzes mischarged Thr-tRNA(Val) in a tRNA-dependent manner. The protein is Valine--tRNA ligase of Staphylococcus saprophyticus subsp. saprophyticus (strain ATCC 15305 / DSM 20229 / NCIMB 8711 / NCTC 7292 / S-41).